The chain runs to 449 residues: Putative gustatory receptor 77a (449 aa).

The Cytoplasmic portion of the chain corresponds to methionine 1–arginine 27. The chain crosses the membrane as a helical span at residues tryptophan 28–methionine 50. Residues alanine 51–arginine 70 lie on the Extracellular side of the membrane. A helical membrane pass occupies residues isoleucine 71–glutamine 93. The Cytoplasmic segment spans residues arginine 94–arginine 102. Residues isoleucine 103–isoleucine 125 traverse the membrane as a helical segment. Residues histidine 126–serine 205 lie on the Extracellular side of the membrane. A helical membrane pass occupies residues leucine 206–leucine 228. Over phenylalanine 229–serine 298 the chain is Cytoplasmic. Residues leucine 299–phenylalanine 321 form a helical membrane-spanning segment. The Extracellular segment spans residues threonine 322–proline 340. The helical transmembrane segment at leucine 341–threonine 363 threads the bilayer. The Cytoplasmic segment spans residues tyrosine 364–lysine 420. A helical membrane pass occupies residues leucine 421 to phenylalanine 443. The Extracellular segment spans residues aspartate 444–lysine 449.

This sequence belongs to the insect chemoreceptor superfamily. Gustatory receptor (GR) family. Gr77a subfamily. In larvae, is expressed in dorsal pharyngeal sense organ.

Its subcellular location is the cell membrane. Its function is as follows. Probable gustatory receptor which mediates acceptance or avoidance behavior, depending on its substrates. The sequence is that of Putative gustatory receptor 77a (Gr77a) from Drosophila melanogaster (Fruit fly).